The following is a 389-amino-acid chain: Na(+)/H(+) antiporter NhaA 1 (389 aa).

The next 12 helical transmembrane spans lie at 12 to 32 (VLNEAFGGVLLIVCTLLALLV), 62 to 82 (FLLWINDGLISIFFFAIGLEL), 97 to 117 (IVLPFMAALGGILIPAMLFVL), 128 to 148 (GWAIPTATDTAFALAILMMCG), 157 to 177 (IFLLSLAIFDDVGAILIIAIF), 184 to 204 (IVAFVVAGIAILAMLVLNILG), 220 to 240 (ISVLKSGVHATLAGIITAFFI), 260 to 280 (FWLAFVILPLFAFANAGVNLS), 282 to 302 (IDIGAIFSGVSVGIFLGLFVG), 305 to 325 (AGVFLFSYLAIRFKFAALPQG), 331 to 351 (LYGVCILTGIGFTMSLFIDGL), and 365 to 385 (LAILIASFCSGIWGFIYLKFF).

The protein belongs to the NhaA Na(+)/H(+) (TC 2.A.33) antiporter family.

It localises to the cell inner membrane. The enzyme catalyses Na(+)(in) + 2 H(+)(out) = Na(+)(out) + 2 H(+)(in). In terms of biological role, na(+)/H(+) antiporter that extrudes sodium in exchange for external protons. In Campylobacter jejuni subsp. jejuni serotype O:23/36 (strain 81-176), this protein is Na(+)/H(+) antiporter NhaA 1.